We begin with the raw amino-acid sequence, 165 residues long: Yapsin-5 (165 aa).

A signal peptide spans 1–24 (MQLFSILSLLSSLMCSLTVLGSSA). Asparagine 57 carries N-linked (GlcNAc...) asparagine glycosylation. Residues 67 to 165 (YVVKMEIGTP…TRLSSMTYTY (99 aa)) enclose the Peptidase A1 domain.

This sequence belongs to the peptidase A1 family.

The protein is Yapsin-5 (YPS5) of Saccharomyces cerevisiae (strain ATCC 204508 / S288c) (Baker's yeast).